A 957-amino-acid polypeptide reads, in one-letter code: Glycine dehydrogenase (decarboxylating) (957 aa).

The residue at position 708 (lysine 708) is an N6-(pyridoxal phosphate)lysine.

This sequence belongs to the GcvP family. The glycine cleavage system is composed of four proteins: P, T, L and H. Pyridoxal 5'-phosphate serves as cofactor.

The enzyme catalyses N(6)-[(R)-lipoyl]-L-lysyl-[glycine-cleavage complex H protein] + glycine + H(+) = N(6)-[(R)-S(8)-aminomethyldihydrolipoyl]-L-lysyl-[glycine-cleavage complex H protein] + CO2. In terms of biological role, the glycine cleavage system catalyzes the degradation of glycine. The P protein binds the alpha-amino group of glycine through its pyridoxal phosphate cofactor; CO(2) is released and the remaining methylamine moiety is then transferred to the lipoamide cofactor of the H protein. This Salmonella typhimurium (strain LT2 / SGSC1412 / ATCC 700720) protein is Glycine dehydrogenase (decarboxylating).